The following is a 118-amino-acid chain: V-type proton ATPase subunit G 1 (118 aa).

At Ala-2 the chain carries N-acetylalanine. Residues 55–90 (FQSKQQAAMGSQGNLSAEVEQATRRQVQGMQSSQQR) form a disordered region. Composition is skewed to polar residues over residues 56 to 69 (QSKQ…QGNL) and 78 to 89 (RRQVQGMQSSQQ).

Belongs to the V-ATPase G subunit family. As to quaternary structure, V-ATPase is a heteromultimeric enzyme made up of two complexes: the ATP-hydrolytic V1 complex and the proton translocation V0 complex. The V1 complex consists of three catalytic AB heterodimers that form a heterohexamer, three peripheral stalks each consisting of EG heterodimers, one central rotor including subunits D and F, and the regulatory subunits C and H. The proton translocation complex V0 consists of the proton transport subunit a, a ring of proteolipid subunits c9c'', rotary subunit d, subunits e and f, and the accessory subunits ATP6AP1/Ac45 and ATP6AP2/PRR.

Its subcellular location is the apical cell membrane. Functionally, subunit of the V1 complex of vacuolar(H+)-ATPase (V-ATPase), a multisubunit enzyme composed of a peripheral complex (V1) that hydrolyzes ATP and a membrane integral complex (V0) that translocates protons. V-ATPase is responsible for acidifying and maintaining the pH of intracellular compartments and in some cell types, is targeted to the plasma membrane, where it is responsible for acidifying the extracellular environment. In aerobic conditions, involved in intracellular iron homeostasis, thus triggering the activity of Fe(2+) prolyl hydroxylase (PHD) enzymes, and leading to HIF1A hydroxylation and subsequent proteasomal degradation. The protein is V-type proton ATPase subunit G 1 (ATP6V1G1) of Canis lupus familiaris (Dog).